Consider the following 388-residue polypeptide: 3-sulfinopropanoyl-CoA desulfinase (388 aa).

FAD-binding positions include 121-124 (ICIT), S130, and 153-156 (HWIT). 240–241 (YN) serves as a coordination point for substrate. FAD-binding positions include R269, Q336, 363–367 (GGTAQ), and Q384.

The protein belongs to the acyl-CoA dehydrogenase family. As to quaternary structure, homotrimer or homotetramer. The cofactor is FAD.

It catalyses the reaction 3-sulfinopropanoyl-CoA + H2O = propanoyl-CoA + sulfite + H(+). Its function is as follows. Catalyzes the conversion 3-sulfinopropanoyl-CoA (3SP-CoA) to propanoyl-CoA by abstraction of sulfite. Does not show dehydrogenase activity. In Paraburkholderia xenovorans (strain LB400), this protein is 3-sulfinopropanoyl-CoA desulfinase.